A 106-amino-acid polypeptide reads, in one-letter code: uncharacterized protein (106 aa).

Residues 78-98 (LAITGYVVSIPIVLPILIIFI) traverse the membrane as a helical segment.

The protein resides in the membrane. This is an uncharacterized protein from Haemophilus influenzae (strain ATCC 51907 / DSM 11121 / KW20 / Rd).